The primary structure comprises 321 residues: Probable proline iminopeptidase (321 aa).

The AB hydrolase-1 domain occupies 35–296 (KPVVFLHGGP…IVVPDAGHSM (262 aa)). The active-site Nucleophile is Ser110. Residue Asp266 is part of the active site. The active-site Proton donor is His294.

It belongs to the peptidase S33 family.

Its subcellular location is the cytoplasm. The enzyme catalyses Release of N-terminal proline from a peptide.. Specifically catalyzes the removal of N-terminal proline residues from peptides. The chain is Probable proline iminopeptidase (pip) from Leptolyngbya boryana (Plectonema boryanum).